The sequence spans 267 residues: tRNA pseudouridine synthase A (267 aa).

Catalysis depends on Asp-51, which acts as the Nucleophile. A substrate-binding site is contributed by Tyr-109.

This sequence belongs to the tRNA pseudouridine synthase TruA family.

It catalyses the reaction uridine(38/39/40) in tRNA = pseudouridine(38/39/40) in tRNA. Functionally, formation of pseudouridine at positions 38, 39 and 40 in the anticodon stem and loop of transfer RNAs. The chain is tRNA pseudouridine synthase A from Methanothrix thermoacetophila (strain DSM 6194 / JCM 14653 / NBRC 101360 / PT) (Methanosaeta thermophila).